The sequence spans 273 residues: Imidazole glycerol phosphate synthase subunit HisF (273 aa).

Active-site residues include Asp12 and Asp136.

The protein belongs to the HisA/HisF family. As to quaternary structure, heterodimer of HisH and HisF.

Its subcellular location is the cytoplasm. It carries out the reaction 5-[(5-phospho-1-deoxy-D-ribulos-1-ylimino)methylamino]-1-(5-phospho-beta-D-ribosyl)imidazole-4-carboxamide + L-glutamine = D-erythro-1-(imidazol-4-yl)glycerol 3-phosphate + 5-amino-1-(5-phospho-beta-D-ribosyl)imidazole-4-carboxamide + L-glutamate + H(+). It functions in the pathway amino-acid biosynthesis; L-histidine biosynthesis; L-histidine from 5-phospho-alpha-D-ribose 1-diphosphate: step 5/9. In terms of biological role, IGPS catalyzes the conversion of PRFAR and glutamine to IGP, AICAR and glutamate. The HisF subunit catalyzes the cyclization activity that produces IGP and AICAR from PRFAR using the ammonia provided by the HisH subunit. This chain is Imidazole glycerol phosphate synthase subunit HisF, found in Halobacterium salinarum (strain ATCC 29341 / DSM 671 / R1).